The sequence spans 355 residues: tRNA-specific 2-thiouridylase MnmA (355 aa).

Residues 6–13 (LLSGGVDS) and L33 each bind ATP. C100 (nucleophile) is an active-site residue. C100 and C195 form a disulfide bridge. Residue G123 coordinates ATP. Positions 145-147 (KDQ) are interaction with tRNA. C195 acts as the Cysteine persulfide intermediate in catalysis.

The protein belongs to the MnmA/TRMU family.

It localises to the cytoplasm. It catalyses the reaction S-sulfanyl-L-cysteinyl-[protein] + uridine(34) in tRNA + AH2 + ATP = 2-thiouridine(34) in tRNA + L-cysteinyl-[protein] + A + AMP + diphosphate + H(+). Functionally, catalyzes the 2-thiolation of uridine at the wobble position (U34) of tRNA, leading to the formation of s(2)U34. This is tRNA-specific 2-thiouridylase MnmA from Borreliella burgdorferi (strain ATCC 35210 / DSM 4680 / CIP 102532 / B31) (Borrelia burgdorferi).